We begin with the raw amino-acid sequence, 376 residues long: Putative cytosolic 5'-nucleotidase 3 (376 aa).

The active-site Nucleophile is aspartate 119. The Mg(2+) site is built by aspartate 119 and aspartate 121. Aspartate 121 acts as the Proton donor in catalysis. Substrate-binding positions include glutamate 168, serine 189, 236–237, and lysine 286; that span reads SA. Aspartate 312 is a binding site for Mg(2+).

It belongs to the pyrimidine 5'-nucleotidase family.

It localises to the cytoplasm. The enzyme catalyses a ribonucleoside 5'-phosphate + H2O = a ribonucleoside + phosphate. This chain is Putative cytosolic 5'-nucleotidase 3, found in Caenorhabditis elegans.